A 438-amino-acid polypeptide reads, in one-letter code: Thymidine phosphorylase (438 aa).

The protein belongs to the thymidine/pyrimidine-nucleoside phosphorylase family. Homodimer.

It catalyses the reaction thymidine + phosphate = 2-deoxy-alpha-D-ribose 1-phosphate + thymine. It functions in the pathway pyrimidine metabolism; dTMP biosynthesis via salvage pathway; dTMP from thymine: step 1/2. Functionally, the enzymes which catalyze the reversible phosphorolysis of pyrimidine nucleosides are involved in the degradation of these compounds and in their utilization as carbon and energy sources, or in the rescue of pyrimidine bases for nucleotide synthesis. This is Thymidine phosphorylase from Burkholderia lata (strain ATCC 17760 / DSM 23089 / LMG 22485 / NCIMB 9086 / R18194 / 383).